An 876-amino-acid chain; its full sequence is Serrate RNA effector molecule homolog (876 aa).

The disordered stretch occupies residues 1–90; it reads MGDSDDEYDR…RRDWDEHSSD (90 aa). At Gly-2 the chain carries N-acetylglycine. Ser-4 bears the Phosphoserine mark. The residue at position 8 (Tyr-8) is a Phosphotyrosine. A compositionally biased stretch (basic and acidic residues) spans 8-73; the sequence is YDRRRRDKFR…ERFSPPRHEL (66 aa). Phosphoserine occurs at positions 67, 74, and 136. A Glycyl lysine isopeptide (Lys-Gly) (interchain with G-Cter in SUMO2) cross-link involves residue Lys-150. The disordered stretch occupies residues 271–412; that stretch reads EEEEEQAGKP…KPKDAAGLEC (142 aa). Residues 297-347 are compositionally biased toward basic and acidic residues; that stretch reads DGERKTNDKDEKKEDGKQAENDSSNDDKTKKSEGDGDKEEKKEDSEKEAKK. Positions 370 to 387 are enriched in acidic residues; sequence SESESESGQAEEEKEEAE. The span at 388–412 shows a compositional bias: basic and acidic residues; sequence EALKEKEKPKEEEWEKPKDAAGLEC. A phosphoserine mark is found at Ser-493 and Ser-540. At Thr-544 the chain carries Phosphothreonine. A Phosphoserine modification is found at Ser-570. Residues 575–598 are disordered; sequence ELLGSSGGAPPEEPPKEGNPAEIN. Thr-671 carries the phosphothreonine modification. Ser-679 carries the phosphoserine modification. Arg-833, Arg-840, and Arg-850 each carry omega-N-methylarginine. A disordered region spans residues 835-854; sequence NYDAFRGQGGYPGKPRNRMV.

This sequence belongs to the ARS2 family. Interacts with NCBP1 and DROSHA. Interacts with CASP8AP2 and ERBB4. Interacts with LUZP4. Interacts with NCBP2/CBP20 and NCBP3. Interacts with MTREX. In terms of tissue distribution, ubiquitously expressed.

The protein localises to the nucleus. Its subcellular location is the nucleoplasm. It is found in the cytoplasm. In terms of biological role, acts as a mediator between the cap-binding complex (CBC) and the primary microRNAs (miRNAs) processing machinery during cell proliferation. Contributes to the stability and delivery of capped primary miRNA transcripts to the primary miRNA processing complex containing DGCR8 and DROSHA, thereby playing a role in RNA-mediated gene silencing (RNAi) by miRNAs. Binds capped RNAs (m7GpppG-capped RNA); however interaction is probably mediated via its interaction with NCBP1/CBP80 component of the CBC complex. Involved in cell cycle progression at S phase. Does not directly confer arsenite resistance but rather modulates arsenic sensitivity. Independently of its activity on miRNAs, necessary and sufficient to promote neural stem cell self-renewal. Does so by directly binding SOX2 promoter and positively regulating its transcription. The sequence is that of Serrate RNA effector molecule homolog (SRRT) from Homo sapiens (Human).